A 430-amino-acid polypeptide reads, in one-letter code: Bifunctional protein GlmU (430 aa).

The segment at 1–223 (MSFSVVILAA…KNEFQGVNSK (223 aa)) is pyrophosphorylase. UDP-N-acetyl-alpha-D-glucosamine contacts are provided by residues 8-11 (LAAG), K22, and 81-82 (GT). D102 lines the Mg(2+) pocket. The UDP-N-acetyl-alpha-D-glucosamine site is built by G135, E149, N164, and N221. A Mg(2+)-binding site is contributed by N221. Residues 224 to 244 (YDLANAEIVMQDRIKRHWMQQ) are linker. The N-acetyltransferase stretch occupies residues 245–430 (GVIMRLPQTI…DFYYKFFGKN (186 aa)). Positions 308 and 325 each coordinate UDP-N-acetyl-alpha-D-glucosamine. The active-site Proton acceptor is the H336. Y339 and N350 together coordinate UDP-N-acetyl-alpha-D-glucosamine. Residues A353, 359-360 (NY), S378, A396, and R413 contribute to the acetyl-CoA site.

The protein in the N-terminal section; belongs to the N-acetylglucosamine-1-phosphate uridyltransferase family. This sequence in the C-terminal section; belongs to the transferase hexapeptide repeat family. As to quaternary structure, homotrimer. The cofactor is Mg(2+).

Its subcellular location is the cytoplasm. It catalyses the reaction alpha-D-glucosamine 1-phosphate + acetyl-CoA = N-acetyl-alpha-D-glucosamine 1-phosphate + CoA + H(+). The enzyme catalyses N-acetyl-alpha-D-glucosamine 1-phosphate + UTP + H(+) = UDP-N-acetyl-alpha-D-glucosamine + diphosphate. Its pathway is nucleotide-sugar biosynthesis; UDP-N-acetyl-alpha-D-glucosamine biosynthesis; N-acetyl-alpha-D-glucosamine 1-phosphate from alpha-D-glucosamine 6-phosphate (route II): step 2/2. The protein operates within nucleotide-sugar biosynthesis; UDP-N-acetyl-alpha-D-glucosamine biosynthesis; UDP-N-acetyl-alpha-D-glucosamine from N-acetyl-alpha-D-glucosamine 1-phosphate: step 1/1. It functions in the pathway bacterial outer membrane biogenesis; LPS lipid A biosynthesis. Its function is as follows. Catalyzes the last two sequential reactions in the de novo biosynthetic pathway for UDP-N-acetylglucosamine (UDP-GlcNAc). The C-terminal domain catalyzes the transfer of acetyl group from acetyl coenzyme A to glucosamine-1-phosphate (GlcN-1-P) to produce N-acetylglucosamine-1-phosphate (GlcNAc-1-P), which is converted into UDP-GlcNAc by the transfer of uridine 5-monophosphate (from uridine 5-triphosphate), a reaction catalyzed by the N-terminal domain. In Nitratiruptor sp. (strain SB155-2), this protein is Bifunctional protein GlmU.